A 239-amino-acid chain; its full sequence is MKRGVVLFSGGLDSTACLYWAKRHYDEVIMLTINYGSREESVMNKVAEFFSKELKIPLKIIRVNFLNEFSKLSGSALVEGNVPRVSASELEVIERAKETARSVWVPARNLVLISIAASLLDALGGGDIIVGFNKEEGETFPDNTKEFVERVNKALEYATMNKVRVVAPLIELDKRGIARLLKELGAKYEYSNSCYDPKGFTEDGKPIHCGRCESCVRRHRGLMEGIGEDKTVYLVTPKL.

8-18 (FSGGLDSTACL) lines the ATP pocket. Zn(2+) contacts are provided by cysteine 194, cysteine 209, cysteine 212, and cysteine 215.

It belongs to the QueC family. The cofactor is Zn(2+).

The enzyme catalyses 7-carboxy-7-deazaguanine + NH4(+) + ATP = 7-cyano-7-deazaguanine + ADP + phosphate + H2O + H(+). It participates in purine metabolism; 7-cyano-7-deazaguanine biosynthesis. In terms of biological role, catalyzes the ATP-dependent conversion of 7-carboxy-7-deazaguanine (CDG) to 7-cyano-7-deazaguanine (preQ(0)). In Pyrococcus horikoshii (strain ATCC 700860 / DSM 12428 / JCM 9974 / NBRC 100139 / OT-3), this protein is 7-cyano-7-deazaguanine synthase.